We begin with the raw amino-acid sequence, 455 residues long: UDP-N-acetylmuramoylalanine--D-glutamate ligase (455 aa).

119 to 125 (GTNGKTT) is an ATP binding site.

It belongs to the MurCDEF family.

It is found in the cytoplasm. The enzyme catalyses UDP-N-acetyl-alpha-D-muramoyl-L-alanine + D-glutamate + ATP = UDP-N-acetyl-alpha-D-muramoyl-L-alanyl-D-glutamate + ADP + phosphate + H(+). It functions in the pathway cell wall biogenesis; peptidoglycan biosynthesis. Cell wall formation. Catalyzes the addition of glutamate to the nucleotide precursor UDP-N-acetylmuramoyl-L-alanine (UMA). The protein is UDP-N-acetylmuramoylalanine--D-glutamate ligase of Listeria innocua serovar 6a (strain ATCC BAA-680 / CLIP 11262).